The chain runs to 496 residues: Probable cytosol aminopeptidase (496 aa).

Mn(2+)-binding residues include Lys266 and Asp271. Residue Lys278 is part of the active site. Mn(2+)-binding residues include Asp289, Asp348, and Glu350. The active site involves Arg352.

It belongs to the peptidase M17 family. Mn(2+) is required as a cofactor.

It localises to the cytoplasm. The enzyme catalyses Release of an N-terminal amino acid, Xaa-|-Yaa-, in which Xaa is preferably Leu, but may be other amino acids including Pro although not Arg or Lys, and Yaa may be Pro. Amino acid amides and methyl esters are also readily hydrolyzed, but rates on arylamides are exceedingly low.. It carries out the reaction Release of an N-terminal amino acid, preferentially leucine, but not glutamic or aspartic acids.. In terms of biological role, presumably involved in the processing and regular turnover of intracellular proteins. Catalyzes the removal of unsubstituted N-terminal amino acids from various peptides. The protein is Probable cytosol aminopeptidase of Pseudomonas fluorescens (strain SBW25).